Consider the following 133-residue polypeptide: MLSDPIADMLTRIRNATRTHKETVDVPASNFKEQLANLLVAEGYVAGVERTRLDGQPADVLRLTLKYGAKREQVIKHIERISRPGRRAYVSAENLPRIQRGMGVAVVSTSKGLLPDREARKLGVGGEVICVLW.

The protein belongs to the universal ribosomal protein uS8 family. As to quaternary structure, part of the 30S ribosomal subunit. Contacts proteins S5 and S12.

One of the primary rRNA binding proteins, it binds directly to 16S rRNA central domain where it helps coordinate assembly of the platform of the 30S subunit. The sequence is that of Small ribosomal subunit protein uS8 from Deinococcus deserti (strain DSM 17065 / CIP 109153 / LMG 22923 / VCD115).